A 376-amino-acid polypeptide reads, in one-letter code: Enoyl-[acyl-carrier-protein] reductase, mitochondrial (376 aa).

The transit peptide at 1-12 (MLRTLRTSQLAR) directs the protein to the mitochondrion. Tyr79 acts as the Proton donor in catalysis. Residues Asn160, 183-186 (NSGV), 206-208 (RDR), 277-280 (YGGM), 302-304 (YWL), and Lys368 contribute to the NADP(+) site.

Belongs to the zinc-containing alcohol dehydrogenase family. Quinone oxidoreductase subfamily. As to quaternary structure, homodimer.

It is found in the mitochondrion matrix. The catalysed reaction is a 2,3-saturated acyl-[ACP] + NADP(+) = a (2E)-enoyl-[ACP] + NADPH + H(+). Functionally, catalyzes the NADPH-dependent reduction of trans-2-enoyl thioesters in mitochondrial fatty acid synthesis (fatty acid synthesis type II). Fatty acid chain elongation in mitochondria uses acyl carrier protein (ACP) as an acyl group carrier, but the enzyme accepts both ACP and CoA thioesters as substrates in vitro. Required for respiration and the maintenance of the mitochondrial compartment. In Yarrowia lipolytica (strain CLIB 122 / E 150) (Yeast), this protein is Enoyl-[acyl-carrier-protein] reductase, mitochondrial (ETR1).